A 360-amino-acid polypeptide reads, in one-letter code: Chorismate synthase (360 aa).

Residues R48 and R54 each contribute to the NADP(+) site. Residues 125–127 (RSS), 246–247 (NA), G286, 301–305 (KPTSS), and R327 contribute to the FMN site.

It belongs to the chorismate synthase family. In terms of assembly, homotetramer. Requires FMNH2 as cofactor.

The catalysed reaction is 5-O-(1-carboxyvinyl)-3-phosphoshikimate = chorismate + phosphate. The protein operates within metabolic intermediate biosynthesis; chorismate biosynthesis; chorismate from D-erythrose 4-phosphate and phosphoenolpyruvate: step 7/7. Its function is as follows. Catalyzes the anti-1,4-elimination of the C-3 phosphate and the C-6 proR hydrogen from 5-enolpyruvylshikimate-3-phosphate (EPSP) to yield chorismate, which is the branch point compound that serves as the starting substrate for the three terminal pathways of aromatic amino acid biosynthesis. This reaction introduces a second double bond into the aromatic ring system. This is Chorismate synthase from Glaesserella parasuis serovar 5 (strain SH0165) (Haemophilus parasuis).